We begin with the raw amino-acid sequence, 571 residues long: Urease subunit alpha (571 aa).

Residues 131–571 enclose the Urease domain; the sequence is GGIDAHIHFI…LPMAQRYFLF (441 aa). The Ni(2+) site is built by histidine 136, histidine 138, and lysine 219. At lysine 219 the chain carries N6-carboxylysine. Residue histidine 221 participates in substrate binding. Ni(2+) is bound by residues histidine 248 and histidine 274. Histidine 322 acts as the Proton donor in catalysis. Aspartate 362 contributes to the Ni(2+) binding site.

It belongs to the metallo-dependent hydrolases superfamily. Urease alpha subunit family. In terms of assembly, heterotrimer of UreA (gamma), UreB (beta) and UreC (alpha) subunits. Three heterotrimers associate to form the active enzyme. Ni cation is required as a cofactor. Post-translationally, carboxylation allows a single lysine to coordinate two nickel ions.

The protein localises to the cytoplasm. The enzyme catalyses urea + 2 H2O + H(+) = hydrogencarbonate + 2 NH4(+). It participates in nitrogen metabolism; urea degradation; CO(2) and NH(3) from urea (urease route): step 1/1. The sequence is that of Urease subunit alpha from Nostoc punctiforme (strain ATCC 29133 / PCC 73102).